We begin with the raw amino-acid sequence, 182 residues long: Orotate phosphoribosyltransferase (182 aa).

Residues Arg91, Lys92, Lys95, His97, and 117-125 (EDVTTTGGS) contribute to the 5-phospho-alpha-D-ribose 1-diphosphate site. Orotate-binding residues include Thr121 and Arg149.

It belongs to the purine/pyrimidine phosphoribosyltransferase family. PyrE subfamily. As to quaternary structure, homodimer. It depends on Mg(2+) as a cofactor.

It carries out the reaction orotidine 5'-phosphate + diphosphate = orotate + 5-phospho-alpha-D-ribose 1-diphosphate. Its pathway is pyrimidine metabolism; UMP biosynthesis via de novo pathway; UMP from orotate: step 1/2. Catalyzes the transfer of a ribosyl phosphate group from 5-phosphoribose 1-diphosphate to orotate, leading to the formation of orotidine monophosphate (OMP). This Pyrococcus furiosus (strain ATCC 43587 / DSM 3638 / JCM 8422 / Vc1) protein is Orotate phosphoribosyltransferase.